Reading from the N-terminus, the 350-residue chain is Probable arabinogalactan endo-beta-1,4-galactanase A (350 aa).

The first 16 residues, 1–16 (MIYSLLLSALPLLSSA), serve as a signal peptide directing secretion. N-linked (GlcNAc...) asparagine glycosylation occurs at Asn-128. Catalysis depends on Glu-152, which acts as the Proton donor. Glu-262 (nucleophile) is an active-site residue.

Belongs to the glycosyl hydrolase 53 family.

It localises to the secreted. It carries out the reaction The enzyme specifically hydrolyzes (1-&gt;4)-beta-D-galactosidic linkages in type I arabinogalactans.. Functionally, endogalactanase involved in the degradation of plant cell wall polysaccharides, and more particularly of hairy regions of pectin. The chain is Probable arabinogalactan endo-beta-1,4-galactanase A (galA) from Aspergillus niger (strain ATCC MYA-4892 / CBS 513.88 / FGSC A1513).